A 725-amino-acid chain; its full sequence is Heme/hemopexin utilization protein C (725 aa).

A signal peptide spans 1-21 (MRFSKLSLAIATTLVTANALA). The TBDR plug domain maps to 36–147 (DPSRFAYTPE…LGGVVAMRTP (112 aa)). The region spanning 158–725 (KFGVKIRQGY…NAKISAVYSF (568 aa)) is the TBDR beta-barrel domain. The TonB C-terminal box motif lies at 708-725 (SLMEGTGRNAKISAVYSF).

The protein belongs to the TonB-dependent receptor family.

Its subcellular location is the cell outer membrane. Its function is as follows. Required for utilization of free heme at low concentrations. This is Heme/hemopexin utilization protein C (hxuC) from Haemophilus influenzae.